The following is a 557-amino-acid chain: MFS-type transporter clz4 (557 aa).

Transmembrane regions (helical) follow at residues L22–G42, S59–G79, A89–T109, L120–V140, A150–V170, G179–L199, W217–P237, S245–I265, L269–L289, V319–A339, S346–L366, V379–I399, F419–T439, and H479–K499. Basic and acidic residues predominate over residues S505–E523. The disordered stretch occupies residues S505–G557.

The protein belongs to the major facilitator superfamily. TCR/Tet family.

It localises to the membrane. Its function is as follows. MFS-type transporter; part of the gene cluster that mediates the biosynthesis of squalestatin S1 (SQS1, also known as zaragozic acid A), a heavily oxidized fungal polyketide that offers potent cholesterol lowering activity by targeting squalene synthase (SS). This chain is MFS-type transporter clz4, found in Cochliobolus lunatus (Filamentous fungus).